The following is a 180-amino-acid chain: ADP-ribosylation factor 4 (180 aa).

A lipid anchor (N-myristoyl glycine) is attached at G2. GTP is bound by residues 24–31 (GLDAAGKT), 67–71 (DVGGQ), and 126–129 (NKQD). Phosphoserine is present on S147.

Belongs to the small GTPase superfamily. Arf family. Forms a complex containing RAB11A, ASAP1, RAB3IP, RAP11FIP3 and ARF4; the complex promotes preciliary trafficking; the complex binds to RHO in photoreceptor cells and promotes RHO ciliary transport.

The protein resides in the golgi apparatus. The protein localises to the membrane. Its function is as follows. GTP-binding protein that functions as an allosteric activator of the cholera toxin catalytic subunit, an ADP-ribosyltransferase. Involved in protein trafficking; may modulate vesicle budding and uncoating within the Golgi apparatus. Part of the ciliary targeting complex containing Rab11, ASAP1, Rabin8/RAB3IP, RAB11FIP3 and ARF4, which direct preciliary vesicle trafficking to mother centriole and ciliogenesis initiation. The polypeptide is ADP-ribosylation factor 4 (ARF4) (Bos taurus (Bovine)).